Reading from the N-terminus, the 117-residue chain is DNA polymerase epsilon subunit 4 (117 aa).

A disordered region spans residues 1 to 36 (MAAAAAAGSGTPREEEGPAGEAAASQPQAPTSVPGA). N-acetylalanine is present on A2. Phosphothreonine is present on T11. Residues 19-30 (AGEAAASQPQAP) are compositionally biased toward low complexity. S25 is subject to Phosphoserine.

In terms of assembly, component of the DNA polymerase epsilon complex consisting of four subunits: the catalytic subunit POLE and the accessory subunits POLE2, POLE3 and POLE4. Interaction with POLE3 is a prerequisite for further binding with POLE and POLE2.

Its subcellular location is the nucleus. In terms of biological role, accessory component of the DNA polymerase epsilon complex. Participates in DNA repair and in chromosomal DNA replication. This Homo sapiens (Human) protein is DNA polymerase epsilon subunit 4 (POLE4).